A 724-amino-acid chain; its full sequence is MGNNNEFSSGKCPVMHGGMTSAGMASKDWWPNALNLDILHQHDTKTNPMGQQFNYREALKQLDVQALKDDLRALMTDSQPWWPADWGHYGGLMVRMAWHSAGSYRIADGRGGAGTGNQRFAPLNSWPDNVNLDKARRLLWPIKKKYGNKISWADLIVLAGTMAYESMGLKTFGFAFGREDIWHPEIDTYWGSEKEWLAPSGSEGSRYSGERDLENPLAAVMMGLIYVNPEGVDGHPDPQKTANDVRVTFARMAMNDEETVALTAGGHTVGKCHGNGSAANLGAAPEGADLQEQGLGWNNHTTRGIDRDTVSSGIEGAWTSKPTQWDNGYFDMLLGHEWTLTKSPAGAWQWVPIQIAEEDKPVDVEDPSIRLLPIMTDADMAMKVDPTYRQIAERFRQDPAYFSDVFARAWFKLTHRDLGPKSRYFGPDVPQEALIWQDPVPAGRSEYDVAAVKAKIAASGLSIADMVSTAWDSARTFRGSDKRGGANGARIRLAPQNTWEGNEPARLAKVLAVLEPIAAEFNVSVADVIVLAGNLGIEQAAKAAGVAIEVPFAPGRGDATQAMTDEASFEVLEPLADGFRNWLKKDYVVTAEELLLDRAQLMRLTACEMTVLIGGMRVLGANYGGSKVGVFTDRIGVLSNDFFVNLTDMSYTWKPTASNLYEIRERANGALKWTASRVDLVFGSNSILRAYAEVYAQDDNKEKFVRDFVAAWTKVMNADRYDLR.

The tryptophyl-tyrosyl-methioninium (Trp-Tyr) (with M-252) cross-link spans 98-226; it reads WHSAGSYRIA…LAAVMMGLIY (129 aa). The Proton acceptor role is filled by H99. A cross-link (tryptophyl-tyrosyl-methioninium (Tyr-Met) (with W-98)) is located at residues 226-252; sequence YVNPEGVDGHPDPQKTANDVRVTFARM. Residue H267 coordinates heme b.

Belongs to the peroxidase family. Peroxidase/catalase subfamily. Homodimer or homotetramer. It depends on heme b as a cofactor. In terms of processing, formation of the three residue Trp-Tyr-Met cross-link is important for the catalase, but not the peroxidase activity of the enzyme.

It catalyses the reaction H2O2 + AH2 = A + 2 H2O. The enzyme catalyses 2 H2O2 = O2 + 2 H2O. Its function is as follows. Bifunctional enzyme with both catalase and broad-spectrum peroxidase activity. The protein is Catalase-peroxidase of Edwardsiella tarda.